Here is a 532-residue protein sequence, read N- to C-terminus: Spore coat protein SP85 (532 aa).

The signal sequence occupies residues 1–19; sequence MRLLSVLLIGFLCLAGTYA. Asn47 carries N-linked (GlcNAc...) asparagine glycosylation. Positions 197-265 are disordered; the sequence is TQSPTQPPTQ…PTQPPTQPPV (69 aa). The segment covering 201–263 has biased composition (pro residues); sequence TQPPTQPPTY…YPPTQPPTQP (63 aa). The region spanning 267 to 289 is the Follistatin-like 1 domain; the sequence is DCSTLECPEGFHCEIVNNRRTCV. Positions 297 to 320 are disordered; that stretch reads THPPTQSPTYPPTQPPTQPPTYPP. Follistatin-like domains are found at residues 335-359, 400-423, and 430-452; these read SCDNVRCPRGYHCECNHWENVARCV, TCDQVRCPRKHHCECNRKGQVFCV, and TCKQVGCPENHECVSRRGELHCV.

Binds to cotE. In terms of processing, O-glycosylated.

Its subcellular location is the spore wall. Its function is as follows. Required for incorporation of cotE into the spore coat and for the formation of the outer layer. Has a cross-bridging function between cellulose and other coat proteins. The sequence is that of Spore coat protein SP85 (pspB) from Dictyostelium discoideum (Social amoeba).